The primary structure comprises 154 residues: Endoribonuclease YbeY (154 aa).

Zn(2+) is bound by residues His-113, His-117, and His-123.

It belongs to the endoribonuclease YbeY family. It depends on Zn(2+) as a cofactor.

The protein localises to the cytoplasm. In terms of biological role, single strand-specific metallo-endoribonuclease involved in late-stage 70S ribosome quality control and in maturation of the 3' terminus of the 16S rRNA. The chain is Endoribonuclease YbeY from Vibrio parahaemolyticus serotype O3:K6 (strain RIMD 2210633).